Consider the following 302-residue polypeptide: Protoheme IX farnesyltransferase (302 aa).

Transmembrane regions (helical) follow at residues 27–47 (VLTL…QSIH), 48–68 (PVLG…AGAL), 97–117 (SALH…GLAL), 119–139 (VLAA…YTIW), 148–168 (IVIG…AATG), 176–196 (LLFA…ALFI), 219–239 (IQIM…WAMG), 240–260 (LTGA…LLLA), and 280–300 (LFGF…ADKV).

It belongs to the UbiA prenyltransferase family. Protoheme IX farnesyltransferase subfamily.

The protein localises to the cell inner membrane. It catalyses the reaction heme b + (2E,6E)-farnesyl diphosphate + H2O = Fe(II)-heme o + diphosphate. It participates in porphyrin-containing compound metabolism; heme O biosynthesis; heme O from protoheme: step 1/1. Its function is as follows. Converts heme B (protoheme IX) to heme O by substitution of the vinyl group on carbon 2 of heme B porphyrin ring with a hydroxyethyl farnesyl side group. This is Protoheme IX farnesyltransferase from Rhizorhabdus wittichii (strain DSM 6014 / CCUG 31198 / JCM 15750 / NBRC 105917 / EY 4224 / RW1) (Sphingomonas wittichii).